The following is a 682-amino-acid chain: Potassium-transporting ATPase ATP-binding subunit (682 aa).

4 consecutive transmembrane segments (helical) span residues 34–54 (PVMFIVWIGSLLTTCISIAMA), 62–82 (ALFSAAISGWLWITVLFANFA), 219–239 (IALTILLIALTIVFLLATATL), and 254–274 (VLVALLVCLIPTTIGGLLSAI). Residue Asp-307 is the 4-aspartylphosphate intermediate of the active site. Residues Asp-344, Glu-348, 377 to 384 (FTAQSRMS), and Lys-395 each bind ATP. Mg(2+)-binding residues include Asp-518 and Asp-522. 3 consecutive transmembrane segments (helical) span residues 588-608 (FAIIPAAFAATYPQLNALNIM), 616-636 (AILSAVIFNALIIVFLIPLAL), and 656-676 (IYGLGGLLVPFIGIKVIDLLL).

This sequence belongs to the cation transport ATPase (P-type) (TC 3.A.3) family. Type IA subfamily. In terms of assembly, the system is composed of three essential subunits: KdpA, KdpB and KdpC.

It is found in the cell inner membrane. The enzyme catalyses K(+)(out) + ATP + H2O = K(+)(in) + ADP + phosphate + H(+). Part of the high-affinity ATP-driven potassium transport (or Kdp) system, which catalyzes the hydrolysis of ATP coupled with the electrogenic transport of potassium into the cytoplasm. This subunit is responsible for energy coupling to the transport system and for the release of the potassium ions to the cytoplasm. The polypeptide is Potassium-transporting ATPase ATP-binding subunit (Escherichia coli (strain K12 / MC4100 / BW2952)).